A 2055-amino-acid polypeptide reads, in one-letter code: Multiple PDZ domain protein (2055 aa).

Residues 1 to 63 enclose the L27 domain; the sequence is MLETIDKNRA…SLQQLKDQVN (63 aa). Positions 138–225 constitute a PDZ 1 domain; that stretch reads IFELLKPPCG…TVQLVIARGS (88 aa). A Phosphoserine modification is found at Ser231. The region spanning 258 to 338 is the PDZ 2 domain; it reads TIELVNDGSG…RVKLMIARGA (81 aa). Residues 348–360 show a composition bias toward low complexity; it reads LGITLSSSTSSTS. A disordered region spans residues 348-372; the sequence is LGITLSSSTSSTSEMRVDASTQKND. PDZ domains lie at 378-464, 546-627, and 693-779; these read DVEL…MRKG, VAHV…CRRT, and SIEL…VAKP. Residues Ser783 and Ser1066 each carry the phosphoserine modification. A PDZ 6 domain is found at 996 to 1077; the sequence is TVTIAKGSSS…IGPDIKITYV (82 aa). Residues 1111 to 1130 are disordered; the sequence is PELPEREEGEGEESELQNAA. Residues 1139-1231 form the PDZ 7 domain; the sequence is RVELWREPSK…PVVFMVQSII (93 aa). Arg1158 carries the post-translational modification Omega-N-methylarginine. Positions 1264–1274 are enriched in polar residues; the sequence is LTTDQAPSQSE. The tract at residues 1264–1299 is disordered; sequence LTTDQAPSQSESETEKPALCNVPPSSPSVFSEMGSD. Positions 1338–1421 constitute a PDZ 8 domain; that stretch reads VIELEKGQSG…KVKIIFIRNA (84 aa). Over residues 1435–1445 the composition is skewed to low complexity; it reads ADSPSSTSDSP. The disordered stretch occupies residues 1435-1459; it reads ADSPSSTSDSPQNKEVEPCSTTSAS. The PDZ 9 domain occupies 1471–1552; it reads QLELPKDQGG…TVKLTVRAEN (82 aa). Positions 1557 to 1597 are disordered; sequence AVPSSAVTVSGERKDNSQTPAVPAPDLEPIPSTSRSSTPAV. PDZ domains follow at residues 1614–1697 and 1710–1792; these read TIEI…YRDE and TIEL…GRVK. Residues 1795-1834 are disordered; sequence PFHSERRPSQSSQVSESSLSSFTPPLSGINTSESLESNSK. A phosphoserine mark is found at Ser1803 and Ser1809. A compositionally biased stretch (low complexity) spans 1803–1815; sequence SQSSQVSESSLSS. A compositionally biased stretch (polar residues) spans 1816–1834; that stretch reads FTPPLSGINTSESLESNSK. 2 consecutive PDZ domains span residues 1847 to 1933 and 1972 to 2055; these read TVEI…VAGG and TITL…MVLS.

Interacts with CLDN5, DLG4, GRIN1, SYNGAP1, CAMK2A and CAMK2B, HTR2A, HTR2B, HTR2C, PLEKHA1/TAPP1 and PLEKHA2/TAPP2. Interacts with F11R/JAM, CLDN1, NG2, CXADR, CRB1, MPP4 and PALS1. Interacts with FAT4 (via cytoplasmic domain). Interacts with DLL1. In terms of tissue distribution, in the brain, it is strongly expressed in the choroid plexus. Within the hippocampal formation, strongest expression was seen in the soma of CA1-4 pyramidal cells. Expressed in most neocortical regions with the strongest expression in piriform cortex and amygdaloid nuclei but also detected in the subiculum and olfactory bulb. In the cerebellum, the highest level of expression was found in Purkinje cells. Moderately expressed in the granular layer and molecular layer. Expressed in the pontine nuclei, parts of spinal trigeminal nuclei, and the principal sensory trigeminal nuclei of the metencephalon. Expressed in all thalamic and hypothalamic nuclei, and the substantia nigra (at protein level). Ubiquitously expressed.

Its subcellular location is the cell membrane. It is found in the apical cell membrane. It localises to the postsynaptic density. The protein resides in the cell projection. The protein localises to the dendrite. Its subcellular location is the cell junction. It is found in the tight junction. It localises to the synapse. The protein resides in the synaptosome. Member of the NMDAR signaling complex that may play a role in control of AMPAR potentiation and synaptic plasticity in excitatory synapses. Promotes clustering of HT2RC at the cell surface. This Mus musculus (Mouse) protein is Multiple PDZ domain protein (Mpdz).